The primary structure comprises 264 residues: uncharacterized protein (264 aa).

A signal peptide spans 1-26; the sequence is MMKKLFHSTLIVLLFFSFFGVQPIHA.

This is an uncharacterized protein from Bacillus subtilis (strain 168).